The primary structure comprises 278 residues: MNASTARMLNKICTYLFLTLLSIVIIYPLLITASSAFRVGNSAAFQLDFSGSWTLDHFKRLFDETLYLNWYSNTLVIALSVMVLQVTIVTLAGYSYSRYRFAGRKKSLIFFLIIQMVPTMAALTAFYVLAMLIGALDQYWFLTAIYIGGGIPMNTWLMKGYFDTVPREIDEAARIDGAGHLRIFASIVLPLVKPMLAVQALWAFMAPFGDYLLTKFLLRSPERLTIAVGLQSFISNPQQQKVALFAAGAILAALPICVLFFFLQKNFVSGLTAGGTKG.

The next 6 membrane-spanning stretches (helical) occupy residues 12 to 32 (ICTYLFLTLLSIVIIYPLLIT), 74 to 94 (TLVIALSVMVLQVTIVTLAGY), 108 to 128 (LIFFLIIQMVPTMAALTAFYV), 131 to 151 (MLIGALDQYWFLTAIYIGGGI), 183 to 203 (IFASIVLPLVKPMLAVQALWA), and 242 to 262 (VALFAAGAILAALPICVLFFF). An ABC transmembrane type-1 domain is found at 71-263 (YSNTLVIALS…LPICVLFFFL (193 aa)).

This sequence belongs to the binding-protein-dependent transport system permease family. MalFG subfamily. The complex is composed of two ATP-binding proteins (MsmX), two transmembrane proteins (MdxF and MdxG) and a solute-binding protein (MdxE).

Its subcellular location is the cell membrane. Part of the ABC transporter complex involved in maltodextrin import. Probably responsible for the translocation of the substrate across the membrane. This Bacillus subtilis (strain 168) protein is Maltodextrin transport system permease protein MdxG (mdxG).